We begin with the raw amino-acid sequence, 173 residues long: Photosystem I assembly protein Ycf3 (173 aa).

TPR repeat units follow at residues 35 to 68, 72 to 105, and 120 to 153; these read AFAY…EDDP, SYIL…NPRM, and GEKA…APNN.

Belongs to the Ycf3 family.

It is found in the cellular thylakoid membrane. In terms of biological role, essential for the assembly of the photosystem I (PSI) complex. May act as a chaperone-like factor to guide the assembly of the PSI subunits. The sequence is that of Photosystem I assembly protein Ycf3 from Trichodesmium erythraeum (strain IMS101).